Here is a 581-residue protein sequence, read N- to C-terminus: Adenine deaminase (581 aa).

It belongs to the metallo-dependent hydrolases superfamily. Adenine deaminase family. Mn(2+) serves as cofactor.

The enzyme catalyses adenine + H2O + H(+) = hypoxanthine + NH4(+). The protein is Adenine deaminase of Clostridium botulinum (strain Eklund 17B / Type B).